The chain runs to 214 residues: Glycerol-3-phosphate acyltransferase (214 aa).

5 helical membrane-spanning segments follow: residues 4–24, 52–72, 82–102, 118–138, and 159–179; these read LIVAVVAYLIGSVSFAVIVSA, AAILTLIGDAFKGWLPVWFVV, DTSVAIAAVAVFLGHLYPAFF, LAINPILGVATLLTWLIVAFF, and FLFGPHIIALAIVVMSSLLVW.

The protein belongs to the PlsY family. In terms of assembly, probably interacts with PlsX.

It localises to the cell inner membrane. It carries out the reaction an acyl phosphate + sn-glycerol 3-phosphate = a 1-acyl-sn-glycero-3-phosphate + phosphate. The protein operates within lipid metabolism; phospholipid metabolism. Its function is as follows. Catalyzes the transfer of an acyl group from acyl-phosphate (acyl-PO(4)) to glycerol-3-phosphate (G3P) to form lysophosphatidic acid (LPA). This enzyme utilizes acyl-phosphate as fatty acyl donor, but not acyl-CoA or acyl-ACP. In Paraburkholderia xenovorans (strain LB400), this protein is Glycerol-3-phosphate acyltransferase.